A 443-amino-acid chain; its full sequence is Frizzled/smoothened-like sans CRD protein E (443 aa).

The first 23 residues, Met1 to Ser23, serve as a signal peptide directing secretion. At Asn24 to Lys83 the chain is on the extracellular side. Asn47 carries N-linked (GlcNAc...) asparagine glycosylation. A helical transmembrane segment spans residues Val84 to Ile104. The Cytoplasmic segment spans residues Thr105–Thr120. Residues Val121–Leu141 traverse the membrane as a helical segment. At Trp142 to Cys166 the chain is on the extracellular side. A helical membrane pass occupies residues Leu167–Ile187. Residues Ser188 to Lys203 lie on the Cytoplasmic side of the membrane. The chain crosses the membrane as a helical span at residues Leu204 to Val224. Residues Gly225–Gly248 lie on the Extracellular side of the membrane. A helical membrane pass occupies residues Tyr249–Leu269. Residues Lys270–Lys289 lie on the Cytoplasmic side of the membrane. The chain crosses the membrane as a helical span at residues Pro290–Tyr310. Residues Thr311 to His350 are Extracellular-facing. The chain crosses the membrane as a helical span at residues Phe351–Thr371. Over Arg372–Pro443 the chain is Cytoplasmic. 2 stretches are compositionally biased toward low complexity: residues Ser397 to Ser410 and Glu419 to Glu432. Residues Ser397–Pro443 are disordered.

The protein belongs to the G-protein coupled receptor Fz/Smo family.

It localises to the membrane. This chain is Frizzled/smoothened-like sans CRD protein E (fscE), found in Dictyostelium discoideum (Social amoeba).